A 374-amino-acid polypeptide reads, in one-letter code: Ribosomal RNA large subunit methyltransferase G (374 aa).

Belongs to the methyltransferase superfamily. RlmG family.

Its subcellular location is the cytoplasm. The enzyme catalyses guanosine(1835) in 23S rRNA + S-adenosyl-L-methionine = N(2)-methylguanosine(1835) in 23S rRNA + S-adenosyl-L-homocysteine + H(+). Specifically methylates the guanine in position 1835 (m2G1835) of 23S rRNA. This chain is Ribosomal RNA large subunit methyltransferase G, found in Pseudomonas syringae pv. syringae (strain B728a).